A 330-amino-acid chain; its full sequence is tRNA-modifying protein YgfZ (330 aa).

Folate contacts are provided by W28 and W190.

Belongs to the tRNA-modifying YgfZ family.

It localises to the cytoplasm. Folate-binding protein involved in regulating the level of ATP-DnaA and in the modification of some tRNAs. It is probably a key factor in regulatory networks that act via tRNA modification, such as initiation of chromosomal replication. The protein is tRNA-modifying protein YgfZ of Yersinia pestis bv. Antiqua (strain Antiqua).